A 513-amino-acid polypeptide reads, in one-letter code: Cytochrome P450 1A2 (513 aa).

Ser68 carries O-linked (GlcNAc) serine glycosylation. Phe225 lines the substrate pocket. Cys456 serves as a coordination point for heme.

This sequence belongs to the cytochrome P450 family. As to quaternary structure, interacts with PGRMC1; the interaction requires PGRMC1 homodimerization. Heme is required as a cofactor. In terms of tissue distribution, found in lung and liver.

The protein resides in the endoplasmic reticulum membrane. It is found in the microsome membrane. The catalysed reaction is an organic molecule + reduced [NADPH--hemoprotein reductase] + O2 = an alcohol + oxidized [NADPH--hemoprotein reductase] + H2O + H(+). The enzyme catalyses 17beta-estradiol + reduced [NADPH--hemoprotein reductase] + O2 = 2-hydroxy-17beta-estradiol + oxidized [NADPH--hemoprotein reductase] + H2O + H(+). It carries out the reaction 17beta-estradiol + reduced [NADPH--hemoprotein reductase] + O2 = 4-hydroxy-17beta-estradiol + oxidized [NADPH--hemoprotein reductase] + H2O + H(+). It catalyses the reaction estrone + reduced [NADPH--hemoprotein reductase] + O2 = 2-hydroxyestrone + oxidized [NADPH--hemoprotein reductase] + H2O + H(+). The catalysed reaction is estrone + reduced [NADPH--hemoprotein reductase] + O2 = 4-hydroxyestrone + oxidized [NADPH--hemoprotein reductase] + H2O + H(+). The enzyme catalyses cholesterol + reduced [NADPH--hemoprotein reductase] + O2 = 25-hydroxycholesterol + oxidized [NADPH--hemoprotein reductase] + H2O + H(+). It carries out the reaction all-trans-retinol + reduced [NADPH--hemoprotein reductase] + O2 = all-trans-retinal + oxidized [NADPH--hemoprotein reductase] + 2 H2O + H(+). It catalyses the reaction all-trans-retinal + reduced [NADPH--hemoprotein reductase] + O2 = all-trans-retinoate + oxidized [NADPH--hemoprotein reductase] + H2O + 2 H(+). The catalysed reaction is (5Z,8Z,11Z,14Z)-eicosatetraenoate + reduced [NADPH--hemoprotein reductase] + O2 = (14R,15S)-epoxy-(5Z,8Z,11Z)-eicosatrienoate + oxidized [NADPH--hemoprotein reductase] + H2O + H(+). The enzyme catalyses (5Z,8Z,11Z,14Z)-eicosatetraenoate + reduced [NADPH--hemoprotein reductase] + O2 = (14S,15R)-epoxy-(5Z,8Z,11Z)-eicosatrienoate + oxidized [NADPH--hemoprotein reductase] + H2O + H(+). It carries out the reaction (5Z,8Z,11Z,14Z,17Z)-eicosapentaenoate + reduced [NADPH--hemoprotein reductase] + O2 = (17R,18S)-epoxy-(5Z,8Z,11Z,14Z)-eicosatetraenoate + oxidized [NADPH--hemoprotein reductase] + H2O + H(+). It catalyses the reaction (4Z,7Z,10Z,13Z,16Z,19Z)-docosahexaenoate + reduced [NADPH--hemoprotein reductase] + O2 = (19R,20S)-epoxy-(4Z,7Z,10Z,13Z,16Z)-docosapentaenoate + oxidized [NADPH--hemoprotein reductase] + H2O + H(+). The catalysed reaction is (5S)-hydroperoxy-(6E,8Z,11Z,14Z)-eicosatetraenoate = 5-oxo-(6E,8Z,11Z,14Z)-eicosatetraenoate + H2O. The enzyme catalyses (12S)-hydroperoxy-(5Z,8Z,10E,14Z)-eicosatetraenoate = 12-oxo-(5Z,8Z,10E,14Z)-eicosatetraenoate + H2O. It carries out the reaction (15S)-hydroperoxy-(5Z,8Z,11Z,13E)-eicosatetraenoate = 15-oxo-(5Z,8Z,11Z,13E)-eicosatetraenoate + H2O. It catalyses the reaction (13S)-hydroperoxy-(9Z,11E)-octadecadienoate = 13-oxo-(9Z,11E)-octadecadienoate + H2O. The catalysed reaction is (5Z,8Z,11Z,14Z)-eicosatetraenoate + reduced [NADPH--hemoprotein reductase] + O2 = 13-hydroxy-(5Z,8Z,11Z,14Z)-eicosatetraenoate + oxidized [NADPH--hemoprotein reductase] + H2O + H(+). The enzyme catalyses (5Z,8Z,11Z,14Z)-eicosatetraenoate + reduced [NADPH--hemoprotein reductase] + O2 = 19-hydroxy-(5Z,8Z,11Z,14Z)-eicosatetraenoate + oxidized [NADPH--hemoprotein reductase] + H2O + H(+). It carries out the reaction (9Z,12Z)-octadecadienoate + reduced [NADPH--hemoprotein reductase] + O2 = 11-hydroxy-(9Z,12Z)-octadecadienoate + oxidized [NADPH--hemoprotein reductase] + H2O + H(+). It functions in the pathway cofactor metabolism; retinol metabolism. The protein operates within steroid metabolism; cholesterol metabolism. Its pathway is lipid metabolism; arachidonate metabolism. Its function is as follows. A cytochrome P450 monooxygenase involved in the metabolism of various endogenous substrates, including fatty acids, steroid hormones and vitamins. Mechanistically, uses molecular oxygen inserting one oxygen atom into a substrate, and reducing the second into a water molecule, with two electrons provided by NADPH via cytochrome P450 reductase (NADPH--hemoprotein reductase). Catalyzes the hydroxylation of carbon-hydrogen bonds. Exhibits high catalytic activity for the formation of hydroxyestrogens from estrone (E1) and 17beta-estradiol (E2), namely 2-hydroxy E1 and E2. Metabolizes cholesterol toward 25-hydroxycholesterol, a physiological regulator of cellular cholesterol homeostasis. May act as a major enzyme for all-trans retinoic acid biosynthesis in the liver. Catalyzes two successive oxidative transformation of all-trans retinol to all-trans retinal and then to the active form all-trans retinoic acid. Primarily catalyzes stereoselective epoxidation of the last double bond of polyunsaturated fatty acids (PUFA), displaying a strong preference for the (R,S) stereoisomer. Catalyzes bisallylic hydroxylation and omega-1 hydroxylation of PUFA. May also participate in eicosanoids metabolism by converting hydroperoxide species into oxo metabolites (lipoxygenase-like reaction, NADPH-independent). Plays a role in the oxidative metabolism of xenobiotics. Catalyzes the N-hydroxylation of heterocyclic amines and the O-deethylation of phenacetin. Metabolizes caffeine via N3-demethylation. In Mesocricetus auratus (Golden hamster), this protein is Cytochrome P450 1A2 (CYP1A2).